The primary structure comprises 555 residues: Pyrophosphate--fructose 6-phosphate 1-phosphotransferase (555 aa).

Gly82 is a binding site for diphosphate. Residue Arg146 coordinates substrate. Asp176 contacts Mg(2+). Substrate-binding positions include 204-206 (TID), 243-244 (KY), 251-253 (MGR), Glu312, and 428-431 (YEGR). Catalysis depends on Asp206, which acts as the Proton acceptor.

It belongs to the phosphofructokinase type A (PFKA) family. PPi-dependent PFK group II subfamily. Clade 'Long' sub-subfamily. In terms of assembly, homodimer. The cofactor is Mg(2+).

Its subcellular location is the cytoplasm. It catalyses the reaction beta-D-fructose 6-phosphate + diphosphate = beta-D-fructose 1,6-bisphosphate + phosphate + H(+). It participates in carbohydrate degradation; glycolysis; D-glyceraldehyde 3-phosphate and glycerone phosphate from D-glucose: step 3/4. Its activity is regulated as follows. Non-allosteric. Its function is as follows. Catalyzes the phosphorylation of D-fructose 6-phosphate, the first committing step of glycolysis. Uses inorganic phosphate (PPi) as phosphoryl donor instead of ATP like common ATP-dependent phosphofructokinases (ATP-PFKs), which renders the reaction reversible, and can thus function both in glycolysis and gluconeogenesis. Consistently, PPi-PFK can replace the enzymes of both the forward (ATP-PFK) and reverse (fructose-bisphosphatase (FBPase)) reactions. The protein is Pyrophosphate--fructose 6-phosphate 1-phosphotransferase of Borreliella burgdorferi (strain ATCC 35210 / DSM 4680 / CIP 102532 / B31) (Borrelia burgdorferi).